A 444-amino-acid polypeptide reads, in one-letter code: E3 ubiquitin-protein ligase APD2 (444 aa).

Low complexity predominate over residues M1–P15. The tract at residues M1–P41 is disordered. The span at T17–P41 shows a compositional bias: basic and acidic residues. 2 consecutive transmembrane segments (helical) span residues V74–G94 and I312–F332. The RING-type zinc finger occupies C393 to R432.

In terms of assembly, interacts with At1g78040, At1g10650, VHA-c4/AVAP4, VHA-c''2/VMA16 and TUFA. As to expression, expressed in the shoot apical meristems (SAM), root tips, pollen and inflorescences.

The protein resides in the endomembrane system. It catalyses the reaction S-ubiquitinyl-[E2 ubiquitin-conjugating enzyme]-L-cysteine + [acceptor protein]-L-lysine = [E2 ubiquitin-conjugating enzyme]-L-cysteine + N(6)-ubiquitinyl-[acceptor protein]-L-lysine.. It participates in protein modification; protein ubiquitination. In terms of biological role, exhibits E2-dependent E3 ligase activity. Involved in pollen mitosis II (PMII) regulation during male gametogenesis. The protein is E3 ubiquitin-protein ligase APD2 of Arabidopsis thaliana (Mouse-ear cress).